The chain runs to 146 residues: Hemoglobin subunit beta (146 aa).

V1 bears the N-acetylvaline mark. A Globin domain is found at 2-146 (HLTAAEKSAI…VANALAHKYH (145 aa)). H63 serves as a coordination point for heme b. K82 bears the N6-acetyllysine mark. Residue H92 coordinates heme b. At C93 the chain carries S-nitrosocysteine. K144 carries the post-translational modification N6-acetyllysine.

Belongs to the globin family. Heterotetramer of two alpha chains and two beta chains. As to expression, red blood cells.

In terms of biological role, involved in oxygen transport from the lung to the various peripheral tissues. This Cavia porcellus (Guinea pig) protein is Hemoglobin subunit beta (HBB).